The chain runs to 358 residues: Probable branched-chain-amino-acid aminotransferase (358 aa).

Lys196 is modified (N6-(pyridoxal phosphate)lysine).

The protein belongs to the class-IV pyridoxal-phosphate-dependent aminotransferase family. Pyridoxal 5'-phosphate serves as cofactor.

The enzyme catalyses L-leucine + 2-oxoglutarate = 4-methyl-2-oxopentanoate + L-glutamate. The catalysed reaction is L-isoleucine + 2-oxoglutarate = (S)-3-methyl-2-oxopentanoate + L-glutamate. It catalyses the reaction L-valine + 2-oxoglutarate = 3-methyl-2-oxobutanoate + L-glutamate. It participates in amino-acid biosynthesis; L-isoleucine biosynthesis; L-isoleucine from 2-oxobutanoate: step 4/4. It functions in the pathway amino-acid biosynthesis; L-leucine biosynthesis; L-leucine from 3-methyl-2-oxobutanoate: step 4/4. Its pathway is amino-acid biosynthesis; L-valine biosynthesis; L-valine from pyruvate: step 4/4. Functionally, acts on leucine, isoleucine and valine. The chain is Probable branched-chain-amino-acid aminotransferase (ilvE) from Staphylococcus epidermidis (strain ATCC 35984 / DSM 28319 / BCRC 17069 / CCUG 31568 / BM 3577 / RP62A).